The chain runs to 371 residues: Aminomethyltransferase (371 aa).

Belongs to the GcvT family. The glycine cleavage system is composed of four proteins: P, T, L and H.

The catalysed reaction is N(6)-[(R)-S(8)-aminomethyldihydrolipoyl]-L-lysyl-[protein] + (6S)-5,6,7,8-tetrahydrofolate = N(6)-[(R)-dihydrolipoyl]-L-lysyl-[protein] + (6R)-5,10-methylene-5,6,7,8-tetrahydrofolate + NH4(+). In terms of biological role, the glycine cleavage system catalyzes the degradation of glycine. The chain is Aminomethyltransferase from Leptospira interrogans serogroup Icterohaemorrhagiae serovar Lai (strain 56601).